A 109-amino-acid chain; its full sequence is Juvenile hormone esterase, isoform A (109 aa).

This sequence belongs to the type-B carboxylesterase/lipase family. As to expression, fat body, the site of their biosynthesis, and the hemolymph where it is secreted.

It catalyses the reaction juvenile hormone I + H2O = juvenile hormone I carboxylate + methanol + H(+). The catalysed reaction is juvenile hormone III + H2O = juvenile hormone III carboxylate + methanol + H(+). Its function is as follows. JH esterase plays a crucial role in the decrease of JH activity in lepidopteran insects, by hydrolyzing the methyl ester of JH. It is also involved in the transport of JH. This Trichoplusia ni (Cabbage looper) protein is Juvenile hormone esterase, isoform A.